The chain runs to 929 residues: MEPRDPSPEARSSDSESASASSSGSERDADPEPDKAPRRLTKRRFPGLRLFGHRKAITKSGLQHLAPPPPTPGAPCGESERQIRSTVDWSESAAYGEHIWFETNVSGDFCYVGEQYCVAKMLPKSAPRRKCAACKIVVHTPCIGQLEKINFRCKPSFRESGSRNVREPTFVRHHWVHRRRQDGKCRHCGKGFQQKFTFHSKEIVAISCSWCKQAYHSKVSCFMLQQIEEPCSLGVHAAVVIPPTWILRARRPQNTLKASKKKKRASFKRRSSKKGPEEGRWRPFIIRPTPSPLMKPLLVFVNPKSGGNQGAKIIQSFLWYLNPRQVFDLSQGGPREALEMYRKVHNLRILACGGDGTVGWILSTLDQLRLKPPPPVAILPLGTGNDLARTLNWGGGYTDEPVSKILSHVEEGNVVQLDRWDLRAEPNPEAGPEERDDGATDRLPLDVFNNYFSLGFDAHVTLEFHESREANPEKFNSRFRNKMFYAGTAFSDFLMGSSKDLAKHIRVVCDGMDLTPKIQDLKPQCIVFLNIPRYCAGTMPWGHPGEHHDFEPQRHDDGYLEVIGFTMTSLAALQVGGHGERLTQCREVLLTTAKAIPVQVDGEPCKLAASRIRIALRNQATMVQKAKRRSTAPLHSDQQPVPEQLRIQVSRVSMHDYEALHYDKEQLKEASVPLGTVVVPGDSDLELCRAHIERLQQEPDGAGAKSPMCHPLSSKWCFLDATTASRFYRIDRAQEHLNYVTEIAQDEIYILDPELLGASARPDLPTPTSPLPASPCSPTPGSLQGDAALPQGEELIEAAKRNDFCKLQELHRAGGDLMHRDHQSRTLLHHAVSTGSKEVVRYLLDHAPPEILDAVEENGETCLHQAAALGQRTICHYIVEAGASLMKTDQQGDTPRQRAEKAQDTELAAYLENRQHYQMIQREDQETAV.

The segment covering 1-14 (MEPRDPSPEARSSD) has biased composition (basic and acidic residues). Disordered regions lie at residues 1–46 (MEPR…RRFP) and 59–80 (KSGL…GESE). The segment covering 15–24 (SESASASSSG) has biased composition (low complexity). A compositionally biased stretch (basic and acidic residues) spans 25 to 37 (SERDADPEPDKAP). Phorbol-ester/DAG-type zinc fingers lie at residues 98–153 (HIWF…NFRC) and 173–231 (HHWV…EEPC). Residues 257 to 281 (KASKKKKRASFKRRSSKKGPEEGRW) are disordered. Residues 258–273 (ASKKKKRASFKRRSSK) show a composition bias toward basic residues. The mediates interaction with RASGRP1 stretch occupies residues 279-417 (GRWRPFIIRP…HVEEGNVVQL (139 aa)). A DAGKc domain is found at 292–426 (PLMKPLLVFV…LDRWDLRAEP (135 aa)). The Nuclear export signal motif lies at 362 to 370 (LSTLDQLRL). A disordered region spans residues 421–441 (DLRAEPNPEAGPEERDDGATD). The residue at position 706 (Ser706) is a Phosphoserine. Residues 760 to 783 (ARPDLPTPTSPLPASPCSPTPGSL) form a disordered region. Positions 764–778 (LPTPTSPLPASPCSP) are enriched in pro residues. A Phosphoserine modification is found at Ser782. ANK repeat units follow at residues 823–853 (QSRT…EILD) and 858–887 (NGET…SLMK). Residues 925–929 (QETAV) carry the PDZ-binding motif.

Belongs to the eukaryotic diacylglycerol kinase family. As to quaternary structure, interacts (via PDZ-binding motif) with the PDZ domain of the syntrophin SNTG1 and that of SNX27. Interacts with IRS1 in the absence of insulin; insulin stimulation decreases this interaction. Found in a ternary complex with IRS1 and PIP5K1A in the absence of insulin. Interacts with PIP5K1A. Forms a signaling complex with RASGRP1 and HRAS.

It localises to the nucleus. It is found in the cytoplasm. Its subcellular location is the cytosol. The protein resides in the cell membrane. The protein localises to the cell projection. It localises to the lamellipodium. The catalysed reaction is a 1,2-diacyl-sn-glycerol + ATP = a 1,2-diacyl-sn-glycero-3-phosphate + ADP + H(+). It carries out the reaction a 1-O-alkyl-sn-glycerol + ATP = a 1-O-alkyl-sn-glycero-3-phosphate + ADP + H(+). The enzyme catalyses 1-O-alkyl-2-acyl-sn-glycerol + ATP = 1-O-alkyl-2-acyl-sn-glycero-3-phosphate + ADP + H(+). It catalyses the reaction 1,2-didecanoyl-sn-glycerol + ATP = 1,2-didecanoyl-sn-glycero-3-phosphate + ADP + H(+). The catalysed reaction is 1,2-ditetradecanoyl-sn-glycerol + ATP = 1,2-ditetradecanoyl-sn-glycero-3-phosphate + ADP + H(+). It carries out the reaction 1-hexadecanoyl-2-(9Z-octadecenoyl)-sn-glycerol + ATP = 1-hexadecanoyl-2-(9Z-octadecenoyl)-sn-glycero-3-phosphate + ADP + H(+). The enzyme catalyses 1-hexadecanoyl-2-(5Z,8Z,11Z,14Z-eicosatetraenoyl)-sn-glycerol + ATP = 1-hexadecanoyl-2-(5Z,8Z,11Z,14Z-eicosatetraenoyl)-sn-glycero-3-phosphate + ADP + H(+). It catalyses the reaction 1-octadecanoyl-2-(9Z-octadecenoyl)-sn-glycerol + ATP = 1-octadecanoyl-2-(9Z-octadecenoyl)-sn-glycero-3-phosphate + ADP + H(+). The catalysed reaction is 1-octadecanoyl-2-(5Z,8Z,11Z,14Z-eicosatetraenoyl)-sn-glycerol + ATP = 1-octadecanoyl-2-(5Z,8Z,11Z,14Z-eicosatetraenoyl)-sn-glycero-3-phosphate + ADP + H(+). It carries out the reaction 1-octadecanoyl-2-(4Z,7Z,10Z,13Z,16Z,19Z-docosahexaenoyl)-sn-glycerol + ATP = 1-octadecanoyl-2-(4Z,7Z,10Z,13Z,16Z,19Z-docosahexaenoyl)-sn-glycero-3-phosphate + ADP + H(+). The enzyme catalyses 1,2-di-(9Z-octadecenoyl)-sn-glycerol + ATP = 1,2-di-(9Z-octadecenoyl)-sn-glycero-3-phosphate + ADP + H(+). It catalyses the reaction 1-(9Z-octadecenoyl)-2-hexadecanoyl-sn-glycerol + ATP = 1-(9Z)-octadecenoyl-2-hexadecanoyl-sn-glycero-3-phosphate + ADP + H(+). The catalysed reaction is 1-eicosanoyl-2-(5Z,8Z,11Z,14Z)-eicosatetraenoyl-sn-glycerol + ATP = 1-eicosanoyl-2-(5Z,8Z,11Z,14Z)-eicosatetraenoyl-sn-glycero-3-phosphate + ADP + H(+). It carries out the reaction 1,2-di-(5Z,8Z,11Z,14Z)-eicosatetraenoyl-sn-glycerol + ATP = 1,2-di-(5Z,8Z,11Z,14Z)-eicosatetraenoyl-sn-glycero-3-phosphate + ADP + H(+). The enzyme catalyses 1-O-hexadecyl-2-acetyl-sn-glycerol + ATP = 1-O-hexadecyl-2-acetyl-sn-glycero-3-phosphate + ADP + H(+). It catalyses the reaction 1-O-hexadecyl-2-(5Z,8Z,11Z,14Z-eicosatetraenoyl)-sn-glycerol + ATP = 1-O-hexadecyl-2-(5Z,8Z,11Z,14Z-eicosatetraenoyl)-sn-glycero-3-phosphate + ADP + H(+). The catalysed reaction is 1-O-hexadecyl-2-(9Z-octadecenoyl)-sn-glycerol + ATP = 1-O-hexadecyl-2-(9Z-octadecenoyl)-sn-glycero-3-phosphate + ADP + H(+). It carries out the reaction 1-O-hexadecyl-sn-glycerol + ATP = 1-O-hexadecyl-sn-glycero-3-phosphate + ADP + H(+). The protein operates within lipid metabolism; glycerolipid metabolism. Its function is as follows. Diacylglycerol kinase that converts diacylglycerol/DAG into phosphatidic acid/phosphatidate/PA and regulates the respective levels of these two bioactive lipids. Thereby, acts as a central switch between the signaling pathways activated by these second messengers with different cellular targets and opposite effects in numerous biological processes. Also plays an important role in the biosynthesis of complex lipids. Does not exhibit an acyl chain-dependent substrate specificity among diacylglycerol species. Can also phosphorylate 1-alkyl-2-acylglycerol in vitro but less efficiently and with a preference for alkylacylglycerols containing an arachidonoyl group. The biological processes it is involved in include T cell activation since it negatively regulates T-cell receptor signaling which is in part mediated by diacylglycerol. By generating phosphatidic acid, stimulates PIP5KIA activity which regulates actin polymerization. Through the same mechanism could also positively regulate insulin-induced translocation of SLC2A4 to the cell membrane. Regulates RASGRP1 activity. The protein is Diacylglycerol kinase zeta of Rattus norvegicus (Rat).